A 229-amino-acid polypeptide reads, in one-letter code: Cytidylate kinase (229 aa).

Position 12 to 20 (12 to 20 (GPSGAGKGT)) interacts with ATP.

It belongs to the cytidylate kinase family. Type 1 subfamily.

It localises to the cytoplasm. The enzyme catalyses CMP + ATP = CDP + ADP. It carries out the reaction dCMP + ATP = dCDP + ADP. The chain is Cytidylate kinase from Shewanella frigidimarina (strain NCIMB 400).